A 224-amino-acid polypeptide reads, in one-letter code: Lipoprotein-releasing system ATP-binding protein LolD (224 aa).

Residues 4–224 form the ABC transporter domain; sequence LSIRNVFKSY…RLAGGEVSEA (221 aa). 40 to 47 is a binding site for ATP; the sequence is GASGAGKS.

This sequence belongs to the ABC transporter superfamily. Lipoprotein translocase (TC 3.A.1.125) family. In terms of assembly, the complex is composed of two ATP-binding proteins (LolD) and two transmembrane proteins (LolC and LolE).

The protein resides in the cell inner membrane. Part of the ABC transporter complex LolCDE involved in the translocation of mature outer membrane-directed lipoproteins, from the inner membrane to the periplasmic chaperone, LolA. Responsible for the formation of the LolA-lipoprotein complex in an ATP-dependent manner. This Myxococcus xanthus (strain DK1622) protein is Lipoprotein-releasing system ATP-binding protein LolD.